A 223-amino-acid polypeptide reads, in one-letter code: Endonuclease V (223 aa).

D35 and D103 together coordinate Mg(2+).

This sequence belongs to the endonuclease V family. Requires Mg(2+) as cofactor.

The protein localises to the cytoplasm. It carries out the reaction Endonucleolytic cleavage at apurinic or apyrimidinic sites to products with a 5'-phosphate.. Its function is as follows. DNA repair enzyme involved in the repair of deaminated bases. Selectively cleaves double-stranded DNA at the second phosphodiester bond 3' to a deoxyinosine leaving behind the intact lesion on the nicked DNA. The chain is Endonuclease V from Salmonella enteritidis PT4 (strain P125109).